Here is a 448-residue protein sequence, read N- to C-terminus: Phosphoglucosamine mutase (448 aa).

S89 functions as the Phosphoserine intermediate in the catalytic mechanism. Mg(2+) is bound by residues S89, D232, D234, and D236. A Phosphoserine modification is found at S89.

The protein belongs to the phosphohexose mutase family. As to quaternary structure, forms large aggregates. Requires Mg(2+) as cofactor. In terms of processing, activated by phosphorylation.

The enzyme catalyses alpha-D-glucosamine 1-phosphate = D-glucosamine 6-phosphate. In terms of biological role, catalyzes the conversion of glucosamine-6-phosphate to glucosamine-1-phosphate. The polypeptide is Phosphoglucosamine mutase (glmM) (Methanocaldococcus jannaschii (strain ATCC 43067 / DSM 2661 / JAL-1 / JCM 10045 / NBRC 100440) (Methanococcus jannaschii)).